Here is a 530-residue protein sequence, read N- to C-terminus: UDP-N-acetylmuramoyl-L-alanyl-D-glutamate--2,6-diaminopimelate ligase (530 aa).

L52 is a binding site for UDP-N-acetyl-alpha-D-muramoyl-L-alanyl-D-glutamate. Residue 139–145 (GTSGKTT) coordinates ATP. Residues 181-182 (TT), S208, and R216 each bind UDP-N-acetyl-alpha-D-muramoyl-L-alanyl-D-glutamate. An N6-carboxylysine modification is found at K248. Residues R410, 434–437 (DNPR), G488, and E492 contribute to the meso-2,6-diaminopimelate site. Positions 434 to 437 (DNPR) match the Meso-diaminopimelate recognition motif motif.

The protein belongs to the MurCDEF family. MurE subfamily. Requires Mg(2+) as cofactor. Post-translationally, carboxylation is probably crucial for Mg(2+) binding and, consequently, for the gamma-phosphate positioning of ATP.

Its subcellular location is the cytoplasm. It catalyses the reaction UDP-N-acetyl-alpha-D-muramoyl-L-alanyl-D-glutamate + meso-2,6-diaminopimelate + ATP = UDP-N-acetyl-alpha-D-muramoyl-L-alanyl-gamma-D-glutamyl-meso-2,6-diaminopimelate + ADP + phosphate + H(+). The protein operates within cell wall biogenesis; peptidoglycan biosynthesis. In terms of biological role, catalyzes the addition of meso-diaminopimelic acid to the nucleotide precursor UDP-N-acetylmuramoyl-L-alanyl-D-glutamate (UMAG) in the biosynthesis of bacterial cell-wall peptidoglycan. The protein is UDP-N-acetylmuramoyl-L-alanyl-D-glutamate--2,6-diaminopimelate ligase of Mycobacterium leprae (strain TN).